The chain runs to 331 residues: Anthranilate phosphoribosyltransferase (331 aa).

5-phospho-alpha-D-ribose 1-diphosphate is bound by residues Gly78, 81 to 82 (GD), Ser86, 88 to 91 (NIST), 106 to 114 (KHGNKSITS), and Ser118. Anthranilate is bound at residue Gly78. Ser90 lines the Mg(2+) pocket. Asn109 is an anthranilate binding site. Arg163 contacts anthranilate. Residues Asp222 and Glu223 each coordinate Mg(2+).

Belongs to the anthranilate phosphoribosyltransferase family. As to quaternary structure, homodimer. It depends on Mg(2+) as a cofactor.

The catalysed reaction is N-(5-phospho-beta-D-ribosyl)anthranilate + diphosphate = 5-phospho-alpha-D-ribose 1-diphosphate + anthranilate. It functions in the pathway amino-acid biosynthesis; L-tryptophan biosynthesis; L-tryptophan from chorismate: step 2/5. Its function is as follows. Catalyzes the transfer of the phosphoribosyl group of 5-phosphorylribose-1-pyrophosphate (PRPP) to anthranilate to yield N-(5'-phosphoribosyl)-anthranilate (PRA). The chain is Anthranilate phosphoribosyltransferase from Staphylococcus epidermidis (strain ATCC 35984 / DSM 28319 / BCRC 17069 / CCUG 31568 / BM 3577 / RP62A).